Reading from the N-terminus, the 395-residue chain is Calcium sensing receptor, chloroplastic (395 aa).

The segment covering 1–12 has biased composition (low complexity); it reads MAPVPVSVSATL. Residues 1–27 are disordered; it reads MAPVPVSVSATLAPPPAAPPKTTSRSW. The transit peptide at 1–39 directs the protein to the chloroplast; sequence MAPVPVSVSATLAPPPAAPPKTTSRSWERRAPADAAFAA. The Lumenal, thylakoid portion of the chain corresponds to 40-182; the sequence is ASSVAGSAAL…TITSLGPEDY (143 aa). Residues 183 to 203 traverse the membrane as a helical segment; the sequence is VVAAGXAFLAYLLVPPVWSLV. At 204–395 the chain is on the stromal side; it reads SSSLRGYKGD…TRKLLPGGVD (192 aa). Positions 224 to 345 constitute a Rhodanese domain; sequence TTQGYVLIDV…WAQSRLGTDS (122 aa). The residue at position 377 (Thr377) is a Phosphothreonine.

Phosphorylated in both bundle sheath and mesophyll cells, under both low and high light regimes (70 vs 900 umol photons/m-2/s).

It is found in the plastid. The protein localises to the chloroplast thylakoid membrane. Functionally, modulates cytoplasmic Ca(2+) concentration and is crucial for proper stomatal regulation in response to elevated levels of external Ca(2+). May function by regulating concentrations of inositol 1,4,5-trisphosphate (IP3), which in turn triggers release of Ca(2+) from internal stores. May play a role in de-etiolation. The chain is Calcium sensing receptor, chloroplastic from Zea mays (Maize).